Here is a 107-residue protein sequence, read N- to C-terminus: Transmembrane protein 213 (107 aa).

Positions 1 to 27 (MQRLPAATRATLILSLAFASLHSACSA) are cleaved as a signal peptide. Residues 28–70 (EASSSNSSSLTAHHPDPGTLEQCLNVDFCPQAARCCRTGVDEY) are Extracellular-facing. The helical transmembrane segment at 71–91 (GWIAAAVGWSLWFLTLILLCV) threads the bilayer. Topologically, residues 92-107 (DKLMKLTPDEPKDLQA) are cytoplasmic.

Its subcellular location is the membrane. This Homo sapiens (Human) protein is Transmembrane protein 213 (TMEM213).